The following is a 126-amino-acid chain: Fluoride-specific ion channel FluC (126 aa).

Transmembrane regions (helical) follow at residues 4-24, 35-55, 67-87, and 97-117; these read SLLSIACGAVLGAWLRWFVGL, LGTILVNLVGGFIIGFAIALF, FVITGFCGALTTFSTFSAEVI, and FAIALITIHLMGSLLCTVLGL. Residues G74 and T77 each contribute to the Na(+) site.

Belongs to the fluoride channel Fluc/FEX (TC 1.A.43) family.

It localises to the cell inner membrane. It carries out the reaction fluoride(in) = fluoride(out). With respect to regulation, na(+) is not transported, but it plays an essential structural role and its presence is essential for fluoride channel function. Its function is as follows. Fluoride-specific ion channel. Important for reducing fluoride concentration in the cell, thus reducing its toxicity. This is Fluoride-specific ion channel FluC from Acinetobacter baylyi (strain ATCC 33305 / BD413 / ADP1).